The sequence spans 356 residues: Histidinol-phosphate aminotransferase 1 (356 aa).

An N6-(pyridoxal phosphate)lysine modification is found at Lys210.

It belongs to the class-II pyridoxal-phosphate-dependent aminotransferase family. Histidinol-phosphate aminotransferase subfamily. Homodimer. Pyridoxal 5'-phosphate serves as cofactor.

It catalyses the reaction L-histidinol phosphate + 2-oxoglutarate = 3-(imidazol-4-yl)-2-oxopropyl phosphate + L-glutamate. It participates in amino-acid biosynthesis; L-histidine biosynthesis; L-histidine from 5-phospho-alpha-D-ribose 1-diphosphate: step 7/9. In Hydrogenovibrio crunogenus (strain DSM 25203 / XCL-2) (Thiomicrospira crunogena), this protein is Histidinol-phosphate aminotransferase 1.